The sequence spans 244 residues: MPALLKRLLFQVGPHPNERTFTLSSVSTDGHYISLRPFVKPSGDELSFPFEWAFAGTNETVKVNDQGNGVVTQDFNFWLDTNVYLNVPNTHRGEVNTTWKNWDSGCVEETGAVYPFGADKESVSFRELWQPVDPSREDLVIVSPNNEKFSSNARSIVLKVTDEAYDGLVIVIGRWIQGFLSQKNNNTIEGLNFIRLLEKDSGKSEFLLSYGKEVNKIPQSYENLKKGSTVTSNGLNWEVIEYHA.

At serine 143 the chain carries Phosphoserine.

The protein belongs to the HRI1 family. As to quaternary structure, interacts with HRR25. May interact with SEC72.

It localises to the cytoplasm. The protein resides in the nucleus. The polypeptide is Protein HRI1 (HRI1) (Saccharomyces cerevisiae (strain RM11-1a) (Baker's yeast)).